The following is a 206-amino-acid chain: Large ribosomal subunit protein eL13z (206 aa).

The segment at 185–206 (TNKRHAGARAKRAAEAEKEEKK) is disordered. The segment covering 186-195 (NKRHAGARAK) has biased composition (basic residues). The span at 196–206 (RAAEAEKEEKK) shows a compositional bias: basic and acidic residues.

The protein belongs to the eukaryotic ribosomal protein eL13 family.

Its subcellular location is the cytoplasm. The protein is Large ribosomal subunit protein eL13z (RPL13B) of Arabidopsis thaliana (Mouse-ear cress).